We begin with the raw amino-acid sequence, 60 residues long: Protein P7 (60 aa).

Residues 28–48 form a helical membrane-spanning segment; the sequence is FIGVTLIGMFISYYLYALISI.

The protein resides in the host membrane. The polypeptide is Protein P7 (Vitis vinifera (Grape)).